Here is an 807-residue protein sequence, read N- to C-terminus: Glycerol-3-phosphate acyltransferase (807 aa).

Residues 309–314 (CHRSHM) carry the HXXXXD motif motif.

It belongs to the GPAT/DAPAT family.

Its subcellular location is the cell inner membrane. The catalysed reaction is sn-glycerol 3-phosphate + an acyl-CoA = a 1-acyl-sn-glycero-3-phosphate + CoA. The protein operates within phospholipid metabolism; CDP-diacylglycerol biosynthesis; CDP-diacylglycerol from sn-glycerol 3-phosphate: step 1/3. The chain is Glycerol-3-phosphate acyltransferase from Aeromonas hydrophila subsp. hydrophila (strain ATCC 7966 / DSM 30187 / BCRC 13018 / CCUG 14551 / JCM 1027 / KCTC 2358 / NCIMB 9240 / NCTC 8049).